The chain runs to 782 residues: Chondroitin proteoglycan 4 (782 aa).

A signal peptide spans M1–P18. N-linked (GlcNAc...) asparagine glycosylation is found at N76, N208, N462, N468, N474, and N503. The disordered stretch occupies residues I513–K726. Composition is skewed to low complexity over residues E520–G532, S548–E566, S573–T612, F662–S672, and S688–G722. N559 carries N-linked (GlcNAc...) asparagine glycosylation. The O-linked (Xyl...) (chondroitin sulfate) serine glycan is linked to S691. An N-linked (GlcNAc...) asparagine glycan is attached at N699. Residues S701, S704, S708, S714, and S721 are each glycosylated (O-linked (Xyl...) (chondroitin sulfate) serine). N743 carries an N-linked (GlcNAc...) asparagine glycan.

The chain is Chondroitin proteoglycan 4 from Caenorhabditis elegans.